Reading from the N-terminus, the 326-residue chain is MTERYADKQIKLFSLTSNLPIAEKIAKAAGIPLGKMSSRQFSDGEIMINIEETVRGDHIYIIQSTSFPVNDNLWELLIMIDACKRASANTVNIVLPYFGYSRQDRVAKPREPITAKLVANMLTKAGIDRVVTLDLHAVQVQGFFDIPVDNLFTVPLFAERYSKLGLSGSDVVVVSPKNSGIKRARSLAEYLDSPIAIIDYAQDDSEREQGYIIGDVSGKKAILIDDILNTGKTFAEAAKILERSGATDTYAVASHGLFAGGAADVLETAPIKEIIVTDSVKTKNRVPENVTYLSASDLIAEAIIRIHERKPLSPLFSYQPKGKNNA.

Residues 43 to 45 and 102 to 103 each bind ATP; these read DGE and RQ. Position 136 (His-136) interacts with Mg(2+). Residues Asp-225 and 229 to 233 each bind D-ribose 5-phosphate; that span reads NTGKT.

This sequence belongs to the ribose-phosphate pyrophosphokinase family. Class I subfamily. In terms of assembly, homohexamer. Requires Mg(2+) as cofactor.

It localises to the cytoplasm. The enzyme catalyses D-ribose 5-phosphate + ATP = 5-phospho-alpha-D-ribose 1-diphosphate + AMP + H(+). It participates in metabolic intermediate biosynthesis; 5-phospho-alpha-D-ribose 1-diphosphate biosynthesis; 5-phospho-alpha-D-ribose 1-diphosphate from D-ribose 5-phosphate (route I): step 1/1. In terms of biological role, involved in the biosynthesis of the central metabolite phospho-alpha-D-ribosyl-1-pyrophosphate (PRPP) via the transfer of pyrophosphoryl group from ATP to 1-hydroxyl of ribose-5-phosphate (Rib-5-P). In Streptococcus pyogenes serotype M18 (strain MGAS8232), this protein is Putative ribose-phosphate pyrophosphokinase 2.